The following is a 1158-amino-acid chain: ATP-dependent helicase/deoxyribonuclease subunit B (1158 aa).

It belongs to the helicase family. AddB/RexB type 2 subfamily. As to quaternary structure, heterodimer of AddA and RexB. It depends on Mg(2+) as a cofactor.

Functionally, the heterodimer acts as both an ATP-dependent DNA helicase and an ATP-dependent, dual-direction single-stranded exonuclease. Recognizes the chi site generating a DNA molecule suitable for the initiation of homologous recombination. This subunit has 5' -&gt; 3' nuclease activity but not helicase activity. This chain is ATP-dependent helicase/deoxyribonuclease subunit B, found in Lactobacillus johnsonii (strain CNCM I-12250 / La1 / NCC 533).